The following is a 244-amino-acid chain: Adenosine 5'-phosphosulfate reductase (244 aa).

The [4Fe-4S] cluster site is built by Cys129, Cys130, Cys212, and Cys215. Cys240 acts as the Nucleophile; cysteine thiosulfonate intermediate in catalysis.

Belongs to the PAPS reductase family. CysH subfamily. It depends on [4Fe-4S] cluster as a cofactor.

The protein resides in the cytoplasm. The catalysed reaction is [thioredoxin]-disulfide + sulfite + AMP + 2 H(+) = adenosine 5'-phosphosulfate + [thioredoxin]-dithiol. It functions in the pathway sulfur metabolism; hydrogen sulfide biosynthesis; sulfite from sulfate. In terms of biological role, catalyzes the formation of sulfite from adenosine 5'-phosphosulfate (APS) using thioredoxin as an electron donor. This Neisseria meningitidis serogroup A / serotype 4A (strain DSM 15465 / Z2491) protein is Adenosine 5'-phosphosulfate reductase.